We begin with the raw amino-acid sequence, 403 residues long: Basic leucine zipper 25 (403 aa).

2 disordered regions span residues 13–128 and 156–259; these read SFWP…APVV and VKPE…EFDT. The segment covering 24 to 33 has biased composition (low complexity); that stretch reads PGSSSTPSPT. A compositionally biased stretch (polar residues) spans 56 to 69; that stretch reads LSGSDSSPTTNTIE. Low complexity-rich tracts occupy residues 115–128 and 161–174; these read APSS…APVV and SSAS…AQGS. Residues 175–195 are compositionally biased toward polar residues; it reads IVAQTSPGASSVRFSPTTSTQ. Acidic residues predominate over residues 212 to 226; sequence DSDDDDLDGDADNGD. Residue serine 213 is modified to Phosphoserine. Residues 229–292 enclose the bZIP domain; sequence DVKRARRMLS…DAAAVDNRIL (64 aa). Residues 231–250 form a basic motif region; the sequence is KRARRMLSNRESARRSRRRK. Residues 233–240 carry the Nuclear localization signal motif; that stretch reads ARRMLSNR. The segment at 264–271 is leucine-zipper; it reads LRAEHSTL. Residues 332-345 are compositionally biased toward low complexity; that stretch reads NTPSASSSIPPNSN. Disordered regions lie at residues 332–361 and 380–403; these read NTPS…SAGL and EGMQ…NHKH. Over residues 351–361 the composition is skewed to polar residues; the sequence is ANSSTNTSAGL.

Belongs to the bZIP family. Homodimer. Forms a heterodimer with BZIP1, BZIP1, BZIP2, BZIP9, BZIP11, BZIP44, BZIP53 and BZIP63. Interacts with ABI3 and forms a complex made of ABI3, BZIP53 and BZIP25. Expressed in roots, shoots, stems, leaves, stipulae, siliques, seeds, pollen, and flowers.

It is found in the nucleus. Transcription factor that binds to the 5'-ACGT-3' box, especially present in G-box-like motif (5'-CCACGTGGCC-3'), ABRE elements, of seed storage protein (SSP) encoding gene promoters (e.g. At2S and CRU3) and promotes their expression in seeds when in complex with ABI3 and BZIP53. The sequence is that of Basic leucine zipper 25 (BZIP25) from Arabidopsis thaliana (Mouse-ear cress).